An 899-amino-acid chain; its full sequence is Solute carrier family 12 member 9 (899 aa).

Residues 1-42 (MANEHSPLLVHGVYSMMGNAEDSRGGSAGTGEASNPKTDPRK) lie on the Cytoplasmic side of the membrane. A helical transmembrane segment spans residues 43–63 (LNTFFGVMVPTILSMFSIVLF). The Extracellular segment spans residues 64–78 (LRTGFVVGHAGLLHG). The chain crosses the membrane as a helical span at residues 79–99 (LLMLFVAYFIISLTILSICAI). Residues 100 to 125 (STNGAVEGGGAYFMISRSLGPEFGGS) lie on the Cytoplasmic side of the membrane. The chain crosses the membrane as a helical span at residues 126 to 146 (IGLMFYLAKVCACGVYVLGLV). At 147 to 175 (EAIMDVFGQDPGSSVAQGLRVLPQGYWYT) the chain is on the extracellular side. A helical membrane pass occupies residues 176–196 (VLYSSVVLLLCMLVCLVGAHI). Topologically, residues 197-201 (YAKAS) are cytoplasmic. Residues 202 to 222 (FLILLVVTVSLISIIISPLIV) traverse the membrane as a helical segment. The Extracellular portion of the chain corresponds to 223 to 269 (SPQGFNITHTYGNNHSVTVSPSYTGFNSTTLKNNLGPRYSLDYSTNT). Asparagine 228, asparagine 236, and asparagine 249 each carry an N-linked (GlcNAc...) asparagine glycan. Residues 270–290 (MMSFATVFAVMFTSCTGIMAG) traverse the membrane as a helical segment. Over 291–306 (ANMSGELKNPSESIPK) the chain is Cytoplasmic. The chain crosses the membrane as a helical span at residues 307 to 327 (GTIMAVAYTFTVYVLLYLLLS). Topologically, residues 328-350 (STCDRSLLLNDYAVFQRVNVWPP) are extracellular. A helical membrane pass occupies residues 351–371 (FVTIGVYCASLSAAMCSMIGA). At 372–373 (SR) the chain is on the cytoplasmic side. Residues 374 to 394 (ILHALALDQLFGLPLAPAAVT) form a helical membrane-spanning segment. Residues 395-399 (SSSGN) are Extracellular-facing. The chain crosses the membrane as a helical span at residues 400–420 (PWVSVLYTWALVQCTLFAGQL). Residue asparagine 421 is a topological domain, cytoplasmic. The helical transmembrane segment at 422–442 (VIAGIVTVFYLLAYAAVDLAC) threads the bilayer. Over 443 to 455 (LALEWASAPNFRP) the chain is Extracellular. A helical membrane pass occupies residues 456 to 476 (TFQFFSWHTCLLGIISCVVMM). Over 477-487 (FVINPVYSSAS) the chain is Extracellular. Residues 488–510 (IVLLLLLLLFLHYRSPTSSWGYI) traverse the membrane as a helical segment. At 511–563 (SQALIFHQVRKYLLMLDSRKDHVKFWRPQVLLMVSNPRSSCQLICFVNQLKKG) the chain is on the cytoplasmic side. Residues 564-584 (GLFVLGHVQIGDLDVLPADPV) traverse the membrane as a helical segment. Over 585-749 (QPQYNFWLSL…NLLTPGSASY (165 aa)) the chain is Extracellular. The chain crosses the membrane as a helical span at residues 750–770 (ADVGSLFLLQMACVLNMASGW). At 771–899 (RRARLRIFVC…GVTPVTCTEL (129 aa)) the chain is on the cytoplasmic side.

It belongs to the SLC12A transporter family.

The protein resides in the cell membrane. Its subcellular location is the lysosome membrane. In terms of biological role, seems to correspond to a subunit of a multimeric transport system and thus, additional subunits may be required for its function. May play a role in lysosomal ion flux and osmoregulation. The sequence is that of Solute carrier family 12 member 9 (slc12a9) from Danio rerio (Zebrafish).